The following is a 2465-amino-acid chain: Protein DOP1A (2465 aa).

3 disordered regions span residues 559 to 600 (PSGQ…SSES), 625 to 646 (GAAA…TVGS), and 705 to 733 (TEHQ…KEKN). Residues 633–646 (STSSETETASTVGS) are compositionally biased toward low complexity. Positions 707-733 (HQGDLGREQGETSKWDRNSQGDVKEKN) are enriched in basic and acidic residues. Residue serine 1266 is modified to Phosphoserine. 2 stretches are compositionally biased toward basic and acidic residues: residues 1282 to 1291 (EKETIVKESG) and 1305 to 1315 (KKDDDKKKSSN). The segment at 1282–1315 (EKETIVKESGKQPGAKPKVKLARKKDDDKKKSSN) is disordered.

It belongs to the DOP1 family.

It localises to the golgi apparatus membrane. Its function is as follows. May be involved in protein traffic between late Golgi and early endosomes. The chain is Protein DOP1A from Homo sapiens (Human).